The following is a 132-amino-acid chain: UPF0299 membrane protein YohJ (132 aa).

Helical transmembrane passes span 7 to 27 (IIWQYIRAFVLIYACLYAGIF), 31 to 51 (LLPITIPGSIIGMLILFVLLA), 63 to 83 (GCYVLIRYMALLFVPIGVGVM), and 93 to 113 (FGPVVVSCAISTLVVFVVVSW).

The protein belongs to the UPF0299 family.

Its subcellular location is the cell inner membrane. The polypeptide is UPF0299 membrane protein YohJ (Salmonella arizonae (strain ATCC BAA-731 / CDC346-86 / RSK2980)).